The sequence spans 938 residues: Cyclin-dependent kinase-like 5 (938 aa).

Residues 13–297 enclose the Protein kinase domain; it reads FEILGVVGEG…TEQCLNHPTF (285 aa). ATP-binding positions include 19–27 and K42; that span reads VGEGAYGVV. The active-site Proton acceptor is the D135. Disordered stretches follow at residues 298-348, 382-566, 646-865, and 877-938; these read QTQR…DIQN, KTYQ…RHSK, SPQP…LTAQ, and HPLS…KWKQ. Composition is skewed to polar residues over residues 319 to 331 and 382 to 402; these read ESSTLSNRNQSTK and KTYQASTQPGSSSKDLTNNNI. The residue at position 407 (S407) is a Phosphoserine. Basic and acidic residues predominate over residues 407–417; that stretch reads SPKEAKSKTEF. Polar residues-rich tracts occupy residues 434–462, 473–482, and 494–548; these read LKSSTRSQQNRHSFMESSQSKAGTLQPSE, IPQSSRSPSY, and DSKS…SGRN. S479 carries the post-translational modification Phosphoserine. Composition is skewed to basic and acidic residues over residues 549–559 and 679–704; these read NRNEGTLDSRR and QKSEGGVYHDPHSDDGTAPKENRHLY. A Phosphoserine modification is found at S720. The span at 728 to 748 shows a compositional bias: polar residues; it reads HENNVSTRVSSLPSDSSSGTN. S761 is modified (phosphoserine). Basic and acidic residues-rich tracts occupy residues 769–778 and 817–827; these read DQLKEKEKQG and RPKEWRPEKLS. Residues 880–891 show a composition bias toward polar residues; it reads SQATGGSSNIRQ.

This sequence belongs to the protein kinase superfamily. CMGC Ser/Thr protein kinase family. CDC2/CDKX subfamily. Interacts with MECP2. In terms of processing, autophosphorylated.

The protein localises to the nucleus. The protein resides in the cytoplasm. Its subcellular location is the cytoskeleton. It localises to the cilium basal body. It is found in the microtubule organizing center. The protein localises to the centrosome. It carries out the reaction L-seryl-[protein] + ATP = O-phospho-L-seryl-[protein] + ADP + H(+). The catalysed reaction is L-threonyl-[protein] + ATP = O-phospho-L-threonyl-[protein] + ADP + H(+). Mediates phosphorylation of MECP2. May regulate ciliogenesis. In Mus musculus (Mouse), this protein is Cyclin-dependent kinase-like 5.